The sequence spans 116 residues: uncharacterized protein (116 aa).

Helical transmembrane passes span 8 to 28 (FMIY…VSFA), 39 to 59 (GLLL…NPPF), and 75 to 95 (FLLI…YLMV).

To M.jannaschii MJ1580.

It is found in the cell membrane. This is an uncharacterized protein from Methanothermobacter thermautotrophicus (strain ATCC 29096 / DSM 1053 / JCM 10044 / NBRC 100330 / Delta H) (Methanobacterium thermoautotrophicum).